The sequence spans 235 residues: 1-(5-phosphoribosyl)-5-[(5-phosphoribosylamino)methylideneamino] imidazole-4-carboxamide isomerase (235 aa).

The Proton acceptor role is filled by Asp-8. The active-site Proton donor is the Asp-129.

It belongs to the HisA/HisF family.

The protein resides in the cytoplasm. It carries out the reaction 1-(5-phospho-beta-D-ribosyl)-5-[(5-phospho-beta-D-ribosylamino)methylideneamino]imidazole-4-carboxamide = 5-[(5-phospho-1-deoxy-D-ribulos-1-ylimino)methylamino]-1-(5-phospho-beta-D-ribosyl)imidazole-4-carboxamide. It functions in the pathway amino-acid biosynthesis; L-histidine biosynthesis; L-histidine from 5-phospho-alpha-D-ribose 1-diphosphate: step 4/9. This is 1-(5-phosphoribosyl)-5-[(5-phosphoribosylamino)methylideneamino] imidazole-4-carboxamide isomerase from Thermoanaerobacter sp. (strain X514).